Here is a 387-residue protein sequence, read N- to C-terminus: GTPase Obg (387 aa).

The Obg domain occupies 1–159; sequence MKFVDEAIIR…RSLKLELLLL (159 aa). Positions 160-333 constitute an OBG-type G domain; the sequence is ADVGLLGMPN…LAVKLLDFIA (174 aa). Residues 166–173, 191–195, 213–216, 283–286, and 314–316 contribute to the GTP site; these read GMPNAGKS, FTTLV, DIPG, NKAD, and SAY. Positions 173 and 193 each coordinate Mg(2+).

Belongs to the TRAFAC class OBG-HflX-like GTPase superfamily. OBG GTPase family. As to quaternary structure, monomer. Mg(2+) is required as a cofactor.

It localises to the cytoplasm. Its function is as follows. An essential GTPase which binds GTP, GDP and possibly (p)ppGpp with moderate affinity, with high nucleotide exchange rates and a fairly low GTP hydrolysis rate. Plays a role in control of the cell cycle, stress response, ribosome biogenesis and in those bacteria that undergo differentiation, in morphogenesis control. This Shewanella halifaxensis (strain HAW-EB4) protein is GTPase Obg.